The following is a 136-amino-acid chain: Prefoldin subunit alpha (136 aa).

The protein belongs to the prefoldin subunit alpha family. In terms of assembly, heterohexamer of two alpha and four beta subunits.

The protein resides in the cytoplasm. Functionally, molecular chaperone capable of stabilizing a range of proteins. Seems to fulfill an ATP-independent, HSP70-like function in archaeal de novo protein folding. The polypeptide is Prefoldin subunit alpha (Pyrobaculum arsenaticum (strain DSM 13514 / JCM 11321 / PZ6)).